Reading from the N-terminus, the 200-residue chain is Pyridoxine/pyridoxamine 5'-phosphate oxidase (200 aa).

FMN is bound by residues 48–53 (RMVLLK), 63–64 (YT), K70, and Q92. K53 serves as a coordination point for substrate. The substrate site is built by Y110, R114, and S118. FMN is bound by residues 127–128 (QS) and W171. Substrate is bound at residue 177-179 (RLH). R181 lines the FMN pocket.

This sequence belongs to the pyridoxamine 5'-phosphate oxidase family. In terms of assembly, homodimer. FMN is required as a cofactor.

It carries out the reaction pyridoxamine 5'-phosphate + O2 + H2O = pyridoxal 5'-phosphate + H2O2 + NH4(+). The catalysed reaction is pyridoxine 5'-phosphate + O2 = pyridoxal 5'-phosphate + H2O2. The protein operates within cofactor metabolism; pyridoxal 5'-phosphate salvage; pyridoxal 5'-phosphate from pyridoxamine 5'-phosphate: step 1/1. Its pathway is cofactor metabolism; pyridoxal 5'-phosphate salvage; pyridoxal 5'-phosphate from pyridoxine 5'-phosphate: step 1/1. Catalyzes the oxidation of either pyridoxine 5'-phosphate (PNP) or pyridoxamine 5'-phosphate (PMP) into pyridoxal 5'-phosphate (PLP). In Cereibacter sphaeroides (strain ATCC 17029 / ATH 2.4.9) (Rhodobacter sphaeroides), this protein is Pyridoxine/pyridoxamine 5'-phosphate oxidase.